The chain runs to 307 residues: ADP,ATP carrier protein 3 (307 aa).

Solcar repeat units follow at residues 10–103 (TNFA…IKLM), 114–206 (KWFA…LKPL), and 214–300 (GSFL…LQMI). The next 5 membrane-spanning stretches (helical) occupy residues 12-39 (FAINFLMGGVSAAIAKTAASPIERVKIL), 80-104 (TANVIRYFPTQALNFAFKDKIKLMF), 112-132 (YGKWFAGNLASGGAAGALSLL), 182-203 (FMPSVVGIVVYRGLYFGMFDSL), and 217-237 (LASFLLGWVVTTGASTCSYPL). 2 residues coordinate ADP: arginine 85 and lysine 97. Arginine 241 provides a ligand contact to ADP. The tract at residues 241 to 246 (RRRMMM) is important for transport activity. The Nucleotide carrier signature motif signature appears at 241–246 (RRRMMM). The chain crosses the membrane as a helical span at residues 277–297 (CGANILRSVAGAGVISMYDQL).

Belongs to the mitochondrial carrier (TC 2.A.29) family. In terms of assembly, monomer.

It is found in the mitochondrion inner membrane. It carries out the reaction ADP(in) + ATP(out) = ADP(out) + ATP(in). Its activity is regulated as follows. The matrix-open state (m-state) is inhibited by the membrane-permeable bongkrekic acid (BKA). The cytoplasmic-open state (c-state) is inhibited by the membrane-impermeable toxic inhibitor carboxyatractyloside (CATR). Its function is as follows. ADP:ATP antiporter that mediates import of ADP into the mitochondrial matrix for ATP synthesis, and export of ATP out to fuel the cell. Cycles between the cytoplasmic-open state (c-state) and the matrix-open state (m-state): operates by the alternating access mechanism with a single substrate-binding site intermittently exposed to either the cytosolic (c-state) or matrix (m-state) side of the inner mitochondrial membrane. The chain is ADP,ATP carrier protein 3 (AAC3) from Saccharomyces cerevisiae (strain ATCC 204508 / S288c) (Baker's yeast).